Reading from the N-terminus, the 425-residue chain is MLDLKFIRENPDAVREAIRVKNVALDLDDLLQRDRDLVALKQRVEAMQTERNANAKLVPKASPEDRPGLIQKGKDLSEDLKALEPQLREQEDALKQLLLRVPNIPLPGVPVGKDEDDNVELRREGELPGFDFTPLDQVEILEKQGWADFERVARVSGSRSYLLKGDAALLEMAVLMFALDFLSQRGFTPLSTTALVRRETLVNSGHFPGDEESVYKLEGDELLLAGTAEVPINSLYAGEQLSADELPLTFAGFSAAFRREAGSAGRDVRGLIRVHEFRKVEQYVLCRADQEEGLKWFERLLSNAEGLLQALELPYRVIQNCTGDMGAGKVLMYDIETWVPSEQKYRETHSCSYLGDWQARRTGLRYRDEHGKLLYAHTLNNTGIASPRILVPLLENHQQADGTVRVPAALRPYLGGREVLGQPVR.

An L-serine-binding site is contributed by 227–229 (TAE). ATP contacts are provided by residues 258–260 (RRE) and valine 274. Residue glutamate 281 participates in L-serine binding. Residue 347–350 (ETHS) coordinates ATP. Threonine 382 lines the L-serine pocket.

Belongs to the class-II aminoacyl-tRNA synthetase family. Type-1 seryl-tRNA synthetase subfamily. As to quaternary structure, homodimer. The tRNA molecule binds across the dimer.

Its subcellular location is the cytoplasm. The enzyme catalyses tRNA(Ser) + L-serine + ATP = L-seryl-tRNA(Ser) + AMP + diphosphate + H(+). It carries out the reaction tRNA(Sec) + L-serine + ATP = L-seryl-tRNA(Sec) + AMP + diphosphate + H(+). It participates in aminoacyl-tRNA biosynthesis; selenocysteinyl-tRNA(Sec) biosynthesis; L-seryl-tRNA(Sec) from L-serine and tRNA(Sec): step 1/1. Catalyzes the attachment of serine to tRNA(Ser). Is also able to aminoacylate tRNA(Sec) with serine, to form the misacylated tRNA L-seryl-tRNA(Sec), which will be further converted into selenocysteinyl-tRNA(Sec). This is Serine--tRNA ligase from Deinococcus radiodurans (strain ATCC 13939 / DSM 20539 / JCM 16871 / CCUG 27074 / LMG 4051 / NBRC 15346 / NCIMB 9279 / VKM B-1422 / R1).